We begin with the raw amino-acid sequence, 486 residues long: Malonate-semialdehyde dehydrogenase (486 aa).

Phe-154, Lys-178, Glu-181, Arg-182, and Ser-231 together coordinate NAD(+). The Nucleophile role is filled by Cys-286. An NAD(+)-binding site is contributed by Glu-386.

The protein belongs to the aldehyde dehydrogenase family. IolA subfamily. As to quaternary structure, homotetramer.

It catalyses the reaction 3-oxopropanoate + NAD(+) + CoA + H2O = hydrogencarbonate + acetyl-CoA + NADH + H(+). The catalysed reaction is 2-methyl-3-oxopropanoate + NAD(+) + CoA + H2O = propanoyl-CoA + hydrogencarbonate + NADH + H(+). The protein operates within polyol metabolism; myo-inositol degradation into acetyl-CoA; acetyl-CoA from myo-inositol: step 7/7. In terms of biological role, catalyzes the oxidation of malonate semialdehyde (MSA) and methylmalonate semialdehyde (MMSA) into acetyl-CoA and propanoyl-CoA, respectively. Is involved in a myo-inositol catabolic pathway. Bicarbonate, and not CO2, is the end-product of the enzymatic reaction. The polypeptide is Malonate-semialdehyde dehydrogenase (Bacillus cereus (strain ATCC 14579 / DSM 31 / CCUG 7414 / JCM 2152 / NBRC 15305 / NCIMB 9373 / NCTC 2599 / NRRL B-3711)).